Here is a 101-residue protein sequence, read N- to C-terminus: Signal recognition particle 19 kDa protein (101 aa).

It belongs to the SRP19 family. As to quaternary structure, part of the signal recognition particle protein translocation system, which is composed of SRP and FtsY. Archaeal SRP consists of a 7S RNA molecule of 300 nucleotides and two protein subunits: SRP54 and SRP19.

Its subcellular location is the cytoplasm. Its function is as follows. Involved in targeting and insertion of nascent membrane proteins into the cytoplasmic membrane. Binds directly to 7S RNA and mediates binding of the 54 kDa subunit of the SRP. This Methanosarcina acetivorans (strain ATCC 35395 / DSM 2834 / JCM 12185 / C2A) protein is Signal recognition particle 19 kDa protein.